The sequence spans 790 residues: Centrosomal protein of 78 kDa (790 aa).

Disordered regions lie at residues 325–345 (YQWV…QRKK), 362–385 (GLAT…YAPN), 428–462 (VTVT…IKEE), 654–732 (AKTG…LNEP), and 756–790 (KTIK…AHLT). A phosphoserine mark is found at S330 and S332. Residues 428 to 438 (VTVTVESPSSS) are compositionally biased toward low complexity. Positions 455-510 (QKTSIKEETLQEKLEECLRQLKEERVIRLKADKRVSELEHENAQLRNINFSLSEAL) form a coiled coil. Composition is skewed to basic and acidic residues over residues 693 to 708 (PSRR…KDLL) and 721 to 732 (GPGDRRSLLNEP).

Belongs to the CEP78 family. As to quaternary structure, interacts with PLK4. Interacts with FAM161A. Interacts with IFT20; regulating IFT20 stability and localization. Interacts with TTC21A; regulating TTC21A stability and localization. Interacts with USP16; promoting USP16-dependent deubiquitination of tektins. Interacts with DCAF1/VPRBP; promoting localization of the EDVP complex to centrosomes. Interacts with CEP350; promoting CEP78 localization to centrosome and centriole. Expressed by photoreceptor cells in the retina.

The protein resides in the cytoplasm. The protein localises to the cytoskeleton. It localises to the microtubule organizing center. Its subcellular location is the centrosome. It is found in the centriole. The protein resides in the cilium basal body. Its function is as follows. Centriole wall protein that localizes to mature centrioles and regulates centriole and cilia biogenesis. Involved in centrosome duplication: required for efficient PLK4 centrosomal localization and PLK4-induced overduplication of centrioles. Involved in cilium biogenesis and controls cilium length. Acts as a regulator of protein stability by preventing ubiquitination of centrosomal proteins, such as CCP110 and tektins. Associates with the EDVP complex, preventing ubiquitination and degradation of CCP110. Promotes deubiquitination of tektin proteins (TEKT1, TEKT2, TEK3, TEKT4 and TEKT5) via its interaction with USP16. This is Centrosomal protein of 78 kDa from Mus musculus (Mouse).